The chain runs to 970 residues: Longitudinals lacking protein, isoforms F/I/K/T (970 aa).

One can recognise a BTB domain in the interval 32 to 97; the sequence is VDCTLAAEGK…MYRGEVNISQ (66 aa). Disordered stretches follow at residues 115 to 200, 228 to 340, 447 to 468, and 790 to 843; these read LSDN…SSVL, SSGP…ASAS, DAQQ…EGAQ, and QTVH…LQDD. Composition is skewed to low complexity over residues 162-175, 228-251, 263-293, and 329-340; these read SGDV…SSSP, SSGP…LTST, TSST…QTTS, and NSATGPNPASAS. Composition is skewed to polar residues over residues 447–456 and 808–818; these read DAQQRDPQAS and QLQTHHIQTVV. A compositionally biased stretch (low complexity) spans 819 to 828; that stretch reads QSSSGQQQHD. The C2H2-type 1; degenerate zinc finger occupies 903-925; the sequence is YVCRHCGKKYRWKSTLRRHENVE. The C2H2-type 2 zinc-finger motif lies at 933–955; sequence HPCPYCSYKAKQRGNLGVHVRKH.

By stage 11, isoform F is expressed throughout the mesoderm whereas isoform T, and at low levels isoform I, is expressed throughout the ectoderm. Isoform K is expressed in both mesoderm and ectoderm. Expression becomes restricted during later stages; starting from stage 14 to 15, isoform F is expressed in the gut. Isoform I is expressed in the CNS. Isoform I and isoform F show expression in the epithelium starting at stage 14, though for isoform I the CNS expression remains predominant. Expression is also seen in specific types of cells in the embryo; isoform K is expressed in the ventral furrow at stage 5 and in a dynamic pattern in the ventral neurogenic region starting at stage 7. Isoform T is expressed around the tracheal pits at stage 11. Isoform F shows transient enrichment in a dorsal cell layer in the CNS at stages 13 and 14.

The protein localises to the nucleus. In terms of biological role, putative transcription factor required for axon growth and guidance in the central and peripheral nervous systems. Repels CNS axons away from the midline by promoting the expression of the midline repellent sli and its receptor robo. In Drosophila melanogaster (Fruit fly), this protein is Longitudinals lacking protein, isoforms F/I/K/T.